The chain runs to 111 residues: uncharacterized protein (111 aa).

The segment at 1 to 26 (MDLKDGVEEEEGAGENGKGGTHAQRV) is disordered.

This is an uncharacterized protein from Caenorhabditis elegans.